Reading from the N-terminus, the 535-residue chain is Phosphoenolpyruvate carboxykinase (ATP) (535 aa).

Positions 59, 201, and 207 each coordinate substrate. ATP-binding positions include Lys207, His226, and 243 to 251; that span reads GLSGTGKTT. Positions 207 and 226 each coordinate Mn(2+). Asp264 provides a ligand contact to Mn(2+). ATP contacts are provided by residues Glu292, Arg328, 444–445, and Thr450; that span reads RI. Arg328 is a binding site for substrate.

This sequence belongs to the phosphoenolpyruvate carboxykinase (ATP) family. Requires Mn(2+) as cofactor.

It localises to the cytoplasm. It catalyses the reaction oxaloacetate + ATP = phosphoenolpyruvate + ADP + CO2. Its pathway is carbohydrate biosynthesis; gluconeogenesis. Functionally, involved in the gluconeogenesis. Catalyzes the conversion of oxaloacetate (OAA) to phosphoenolpyruvate (PEP) through direct phosphoryl transfer between the nucleoside triphosphate and OAA. This Porphyromonas gingivalis (strain ATCC BAA-308 / W83) protein is Phosphoenolpyruvate carboxykinase (ATP).